The chain runs to 101 residues: Phosphoribosyl-AMP cyclohydrolase (101 aa).

Asp71 contacts Mg(2+). Cys72 contacts Zn(2+). Asp73 and Asp75 together coordinate Mg(2+). Residues Cys88 and Cys95 each coordinate Zn(2+).

It belongs to the PRA-CH family. As to quaternary structure, homodimer. It depends on Mg(2+) as a cofactor. Zn(2+) is required as a cofactor.

The protein resides in the cytoplasm. It carries out the reaction 1-(5-phospho-beta-D-ribosyl)-5'-AMP + H2O = 1-(5-phospho-beta-D-ribosyl)-5-[(5-phospho-beta-D-ribosylamino)methylideneamino]imidazole-4-carboxamide. It participates in amino-acid biosynthesis; L-histidine biosynthesis; L-histidine from 5-phospho-alpha-D-ribose 1-diphosphate: step 3/9. Its function is as follows. Catalyzes the hydrolysis of the adenine ring of phosphoribosyl-AMP. This chain is Phosphoribosyl-AMP cyclohydrolase, found in Bacillus cereus (strain ATCC 14579 / DSM 31 / CCUG 7414 / JCM 2152 / NBRC 15305 / NCIMB 9373 / NCTC 2599 / NRRL B-3711).